The primary structure comprises 356 residues: Photosystem II protein D1 4 (356 aa).

The next 3 helical transmembrane spans lie at 32 to 49 (YIGW…AATT), 121 to 136 (HFLI…FWEL), and 145 to 159 (WIAV…AATS). His121 provides a ligand contact to chlorophyll a. Positions 173 and 192 each coordinate [CaMn4O5] cluster. A helical transmembrane segment spans residues 200–221 (FHMLGVAGVFGGALLSSLHGSL). Chlorophyll a is bound at residue His201. A quinone is bound at residue His218. Positions 218 and 276 each coordinate Fe cation. The helical transmembrane segment at 278 to 292 (LLAALPTIGIWFAAM) threads the bilayer. Position 336 (His336) interacts with [CaMn4O5] cluster.

This sequence belongs to the reaction center PufL/M/PsbA/D family. As to quaternary structure, PSII is composed of 1 copy each of membrane proteins PsbA, PsbB, PsbC, PsbD, PsbE, PsbF, PsbH, PsbI, PsbJ, PsbK, PsbL, PsbM, PsbT, PsbX, PsbY, PsbZ, Psb30/Ycf12, peripheral proteins PsbO, CyanoQ (PsbQ), PsbU, PsbV and a large number of cofactors. It forms dimeric complexes. It depends on The D1/D2 heterodimer binds P680, chlorophylls that are the primary electron donor of PSII, and subsequent electron acceptors. It shares a non-heme iron and each subunit binds pheophytin, quinone, additional chlorophylls, carotenoids and lipids. D1 provides most of the ligands for the Mn4-Ca-O5 cluster of the oxygen-evolving complex (OEC). There is also a Cl(-1) ion associated with D1 and D2, which is required for oxygen evolution. The PSII complex binds additional chlorophylls, carotenoids and specific lipids. as a cofactor. Tyr-164 forms a radical intermediate that is referred to as redox-active TyrZ, YZ or Y-Z.

It is found in the cellular thylakoid membrane. The enzyme catalyses 2 a plastoquinone + 4 hnu + 2 H2O = 2 a plastoquinol + O2. In terms of biological role, photosystem II (PSII) is a light-driven water:plastoquinone oxidoreductase that uses light energy to abstract electrons from H(2)O, generating O(2) and a proton gradient subsequently used for ATP formation. It consists of a core antenna complex that captures photons, and an electron transfer chain that converts photonic excitation into a charge separation. The D1/D2 (PsbA/PsbD) reaction center heterodimer binds P680, the primary electron donor of PSII as well as several subsequent electron acceptors. The sequence is that of Photosystem II protein D1 4 from Trichormus variabilis (strain ATCC 29413 / PCC 7937) (Anabaena variabilis).